The sequence spans 753 residues: MAP/microtubule affinity-regulating kinase 3 (753 aa).

The segment at 1 to 36 is disordered; the sequence is MSTRTPLPTVNERDTENHTSHGDGRQEVTSRTSRSG. A compositionally biased stretch (basic and acidic residues) spans 11-28; it reads NERDTENHTSHGDGRQEV. Residue S42 is modified to Phosphoserine. The Protein kinase domain maps to 56-307; the sequence is YRLLKTIGKG…LEQIMKDRWI (252 aa). Residues 62–70 and K85 contribute to the ATP site; that span reads IGKGNFAKV. Residue D178 is the Proton acceptor of the active site. T211 is modified (phosphothreonine; by LKB1). A UBA domain is found at 326–365; that stretch reads ISDQKRIDIMVGMGYSQEEIQESLSKMKYDEITATYLLLG. Residues S368, S374, S376, S380, S383, L384, S400, R407, S419, and S469 each carry the phosphoserine modification. The tract at residues 370–600 is disordered; the sequence is ELDASDSSSS…TPLSQTRSRG (231 aa). A compositionally biased stretch (low complexity) spans 374-385; sequence SDSSSSSNLSLA. The segment covering 391-400 has biased composition (polar residues); that stretch reads SDLNNSTGQS. Composition is skewed to polar residues over residues 490 to 513 and 521 to 548; these read STVPSSNTASGGMTRRNTYVCSER and VIQNGKENSTIPDQRTPVASTHSISSAA. Phosphoserine is present on residues S540 and S543. At T549 the chain carries Phosphothreonine. T564 is subject to Phosphothreonine; by PKC/PRKCZ. S583, S598, S601, and S643 each carry phosphoserine. Residues 584–600 show a composition bias toward polar residues; that stretch reads PSLSHEATPLSQTRSRG. Residues 632-655 form a disordered region; it reads NGRYEGSSRNVSAEQKDENKEAKP. Positions 645–655 are enriched in basic and acidic residues; it reads EQKDENKEAKP. Residues 704 to 753 form the KA1 domain; it reads DGHAENLVQWEMEVCKLPRLSLNGVRFKRISGTSIAFKNIASKIANELKL.

This sequence belongs to the protein kinase superfamily. CAMK Ser/Thr protein kinase family. SNF1 subfamily. In terms of assembly, interacts with MAPT/TAU. Interacts with DLG5 (via coiled-coil domain). Interacts with STK3/MST2 and STK4/MST1 in the presence of DLG5. Interacts with YWHAB, YWHAG, YWHAQ and YWHAZ. Interacts with PKP2 (via N-terminus). Interacts with CDC25C. Interacts with KSR1. In terms of processing, phosphorylated at Thr-211 by STK11/LKB1 in complex with STE20-related adapter-alpha (STRADA) pseudo kinase and CAB39. Phosphorylation at Thr-564 by PRKCZ/aPKC inhibits the kinase activity. In terms of tissue distribution, ubiquitous.

It localises to the cell membrane. The protein localises to the cell projection. It is found in the dendrite. The protein resides in the cytoplasm. It carries out the reaction L-seryl-[protein] + ATP = O-phospho-L-seryl-[protein] + ADP + H(+). The catalysed reaction is L-threonyl-[protein] + ATP = O-phospho-L-threonyl-[protein] + ADP + H(+). Its activity is regulated as follows. Activated by phosphorylation on Thr-211. Inhibited by phosphorylation on Thr-564. In terms of biological role, serine/threonine-protein kinase. Involved in the specific phosphorylation of microtubule-associated proteins for MAP2 and MAP4. Phosphorylates the microtubule-associated protein MAPT/TAU. Phosphorylates CDC25C on 'Ser-216'. Regulates localization and activity of some histone deacetylases by mediating phosphorylation of HDAC7, promoting subsequent interaction between HDAC7 and 14-3-3 and export from the nucleus. Regulates localization and activity of MITF by mediating its phosphorylation, promoting subsequent interaction between MITF and 14-3-3 and retention in the cytosol. Negatively regulates the Hippo signaling pathway and antagonizes the phosphorylation of LATS1. Cooperates with DLG5 to inhibit the kinase activity of STK3/MST2 toward LATS1. Phosphorylates PKP2 and KSR1. The chain is MAP/microtubule affinity-regulating kinase 3 (MARK3) from Homo sapiens (Human).